We begin with the raw amino-acid sequence, 450 residues long: Chromosomal replication initiator protein DnaA (450 aa).

Residues 1–73 (MNTKELWIEV…KNILKKLTGI (73 aa)) form a domain I, interacts with DnaA modulators region. The tract at residues 73 to 104 (IQYNISFELEKNINKQASVISKIDTLTENNNL) is domain II. The interval 105-326 (AYYENYTFEN…GAIKRLLFLA (222 aa)) is domain III, AAA+ region. ATP contacts are provided by glycine 149, glycine 151, lysine 152, and threonine 153. A domain IV, binds dsDNA region spans residues 327–450 (VMNKKPNEII…NAIRRKIEGR (124 aa)).

It belongs to the DnaA family. In terms of assembly, oligomerizes as a right-handed, spiral filament on DNA at oriC.

The protein resides in the cytoplasm. In terms of biological role, plays an essential role in the initiation and regulation of chromosomal replication. ATP-DnaA binds to the origin of replication (oriC) to initiate formation of the DNA replication initiation complex once per cell cycle. Binds the DnaA box (a 9 base pair repeat at the origin) and separates the double-stranded (ds)DNA. Forms a right-handed helical filament on oriC DNA; dsDNA binds to the exterior of the filament while single-stranded (ss)DNA is stabiized in the filament's interior. The ATP-DnaA-oriC complex binds and stabilizes one strand of the AT-rich DNA unwinding element (DUE), permitting loading of DNA polymerase. After initiation quickly degrades to an ADP-DnaA complex that is not apt for DNA replication. Binds acidic phospholipids. The sequence is that of Chromosomal replication initiator protein DnaA from Spiroplasma citri.